We begin with the raw amino-acid sequence, 1036 residues long: Mitogen-activated protein kinase kinase kinase 21 (1036 aa).

Residues 1–36 form a disordered region; it reads MALRGAAGATDTPVSSAGGAPGGSASSSSTSSGGSA. Residues 15–36 show a composition bias toward low complexity; sequence SSAGGAPGGSASSSSTSSGGSA. The SH3 domain occupies 38–102; the sequence is AGAGLWAALY…PANYVAPCRP (65 aa). In terms of domain architecture, Protein kinase spans 124–401; sequence LELKELIGAG…ALILEQLTAI (278 aa). ATP-binding positions include 130–138 and Lys-151; that span reads IGAGGFGQV. The Proton acceptor role is filled by Asp-263. At Thr-299 the chain carries Phosphothreonine; by autocatalysis. At Ser-303 the chain carries Phosphoserine; by autocatalysis and MAP4K1. Leucine-zipper regions lie at residues 425-446 and 460-481; these read IQQM…EEEL and LKRR…ELNI. The segment at 517 to 551 is disordered; it reads SDFQHKITVQASPNLDKRRSLNSSSSSPPSSPTMM. 3 positions are modified to phosphoserine: Ser-528, Ser-543, and Ser-547. The residue at position 592 (Thr-592) is a Phosphothreonine. At Ser-614 the chain carries Phosphoserine. A compositionally biased stretch (basic and acidic residues) spans 748–763; sequence AEEPLPKEEKKKREGI. 2 disordered regions span residues 748 to 791 and 923 to 954; these read AEEP…SSPP and PHSH…RSRS.

Belongs to the protein kinase superfamily. STE Ser/Thr protein kinase family. MAP kinase kinase kinase subfamily. As to quaternary structure, homodimer. Interacts with TLR4. It depends on Mg(2+) as a cofactor. In terms of processing, autophosphorylation on serine and threonine residues within the activation loop plays a role in enzyme activation.

It catalyses the reaction L-seryl-[protein] + ATP = O-phospho-L-seryl-[protein] + ADP + H(+). It carries out the reaction L-threonyl-[protein] + ATP = O-phospho-L-threonyl-[protein] + ADP + H(+). Homodimerization via the leucine zipper domains is required for autophosphorylation and subsequent activation. Its function is as follows. Negative regulator of TLR4 signaling. Does not activate JNK1/MAPK8 pathway, p38/MAPK14, nor ERK2/MAPK1 pathways. This chain is Mitogen-activated protein kinase kinase kinase 21, found in Homo sapiens (Human).